The primary structure comprises 203 residues: FMN-dependent NADH:quinone oxidoreductase (203 aa).

143–146 is an FMN binding site; the sequence is SNGG.

This sequence belongs to the azoreductase type 1 family. Homodimer. FMN is required as a cofactor.

It catalyses the reaction 2 a quinone + NADH + H(+) = 2 a 1,4-benzosemiquinone + NAD(+). It carries out the reaction N,N-dimethyl-1,4-phenylenediamine + anthranilate + 2 NAD(+) = 2-(4-dimethylaminophenyl)diazenylbenzoate + 2 NADH + 2 H(+). Functionally, quinone reductase that provides resistance to thiol-specific stress caused by electrophilic quinones. Its function is as follows. Also exhibits azoreductase activity. Catalyzes the reductive cleavage of the azo bond in aromatic azo compounds to the corresponding amines. This chain is FMN-dependent NADH:quinone oxidoreductase, found in Streptococcus suis (strain 98HAH33).